Consider the following 227-residue polypeptide: Floral homeotic protein DEFICIENS (227 aa).

The 55-residue stretch at 3-57 (RGKIQIKRIENQTNRQVTYSKRRNGLFKKAHELSVLCDAKVSIIMISSTQKLHEY) folds into the MADS-box domain. Positions 84–174 (YEKMQEHLKK…VLEFDARRED (91 aa)) constitute a K-box domain.

Its subcellular location is the nucleus. Transcription factor involved in the genetic control of flower development. Acts in conjunction with GLOBOSA (glo). This chain is Floral homeotic protein DEFICIENS (DEFA), found in Antirrhinum majus (Garden snapdragon).